A 323-amino-acid polypeptide reads, in one-letter code: Phosphate acyltransferase (323 aa).

This sequence belongs to the PlsX family. In terms of assembly, homodimer. Probably interacts with PlsY.

The protein localises to the cytoplasm. It carries out the reaction a fatty acyl-[ACP] + phosphate = an acyl phosphate + holo-[ACP]. It functions in the pathway lipid metabolism; phospholipid metabolism. Its function is as follows. Catalyzes the reversible formation of acyl-phosphate (acyl-PO(4)) from acyl-[acyl-carrier-protein] (acyl-ACP). This enzyme utilizes acyl-ACP as fatty acyl donor, but not acyl-CoA. The sequence is that of Phosphate acyltransferase from Finegoldia magna (strain ATCC 29328 / DSM 20472 / WAL 2508) (Peptostreptococcus magnus).